The sequence spans 292 residues: Elongation factor Ts (292 aa).

The segment at 80–83 (TDFV) is involved in Mg(2+) ion dislocation from EF-Tu.

This sequence belongs to the EF-Ts family.

The protein resides in the cytoplasm. In terms of biological role, associates with the EF-Tu.GDP complex and induces the exchange of GDP to GTP. It remains bound to the aminoacyl-tRNA.EF-Tu.GTP complex up to the GTP hydrolysis stage on the ribosome. This Ralstonia pickettii (strain 12J) protein is Elongation factor Ts.